Reading from the N-terminus, the 334-residue chain is MEVAEANSPTEEEEEEEEEEGEEPISEPRPHTRSNPEGAEDRAIGAQANVGSRSEGEGEAATADDGAASVPGAVPKPWQVPAPASEVQIRTPRVNCPEKVIICLDLSEEMSVPKLESFNGSRTNALNVSQKMVEMFVRTKHKIDKSHEFALVVVNDDSAWLSGLTSDPRELCSCLYDLETASCSTFNLEGLFSLIQQKTELPVTENVQTIPPPYVVRTILVYSRPPCQPQFSLTEPMKKMFQCPYFFFDIIYIHSGPEEKEDDMSWKDMFAFMGSLDTKGTSYKYAVALAGPALELHNCVAKLLAHPLQRPCQSHASYSLLEEDEEAGEGEATV.

Met1 bears the N-acetylmethionine mark. The tract at residues 1-79 (MEVAEANSPT…VPGAVPKPWQ (79 aa)) is disordered. Ser8 carries the phosphoserine modification. Residues 10–25 (TEEEEEEEEEEGEEPI) are compositionally biased toward acidic residues. 2 positions are modified to phosphoserine: Ser34 and Ser54. Positions 59–68 (EAATADDGAA) are enriched in low complexity. The VWFA-like stretch occupies residues 100–303 (VIICLDLSEE…LELHNCVAKL (204 aa)).

This sequence belongs to the BABAM1 family. In terms of assembly, component of the ARISC complex, at least composed of UIMC1/RAP80, ABRAXAS1, BRCC3/BRCC36, BABAM2 and BABAM1/NBA1. Component of the BRCA1-A complex, at least composed of BRCA1, BARD1, UIMC1/RAP80, ABRAXAS1, BRCC3/BRCC36, BABAM2 and BABAM1/NBA1. In the BRCA1-A complex, interacts directly with ABRAXAS1 and BABAM2. Component of the BRISC complex, at least composed of ABRAXAS2, BRCC3/BRCC36, BABAM2 and BABAM1/NBA1. Identified in a complex with SHMT2 and the other subunits of the BRISC complex.

Its subcellular location is the cytoplasm. It localises to the nucleus. Functionally, component of the BRCA1-A complex, a complex that specifically recognizes 'Lys-63'-linked ubiquitinated histones H2A and H2AX at DNA lesions sites, leading to target the BRCA1-BARD1 heterodimer to sites of DNA damage at double-strand breaks (DSBs). The BRCA1-A complex also possesses deubiquitinase activity that specifically removes 'Lys-63'-linked ubiquitin on histones H2A and H2AX. In the BRCA1-A complex, it is required for the complex integrity and its localization at DSBs. Component of the BRISC complex, a multiprotein complex that specifically cleaves 'Lys-63'-linked ubiquitin in various substrates. In these 2 complexes, it is probably required to maintain the stability of BABAM2 and help the 'Lys-63'-linked deubiquitinase activity mediated by BRCC3/BRCC36 component. The BRISC complex is required for normal mitotic spindle assembly and microtubule attachment to kinetochores via its role in deubiquitinating NUMA1. Plays a role in interferon signaling via its role in the deubiquitination of the interferon receptor IFNAR1; deubiquitination increases IFNAR1 activity by enhancing its stability and cell surface expression. Down-regulates the response to bacterial lipopolysaccharide (LPS) via its role in IFNAR1 deubiquitination. This Rattus norvegicus (Rat) protein is BRISC and BRCA1-A complex member 1 (Babam1).